We begin with the raw amino-acid sequence, 121 residues long: Homeobox protein HD-6 (121 aa).

The homeobox DNA-binding region spans Pro-28–Tyr-87.

The protein localises to the nucleus. The chain is Homeobox protein HD-6 (HD-6) from Encephalitozoon cuniculi (strain GB-M1) (Microsporidian parasite).